A 155-amino-acid polypeptide reads, in one-letter code: Endoribonuclease YbeY (155 aa).

Residues His-118, His-122, and His-128 each coordinate Zn(2+).

Belongs to the endoribonuclease YbeY family. Zn(2+) serves as cofactor.

It is found in the cytoplasm. Single strand-specific metallo-endoribonuclease involved in late-stage 70S ribosome quality control and in maturation of the 3' terminus of the 16S rRNA. This chain is Endoribonuclease YbeY, found in Bordetella petrii (strain ATCC BAA-461 / DSM 12804 / CCUG 43448).